Consider the following 939-residue polypeptide: Aconitate hydratase A (939 aa).

The tract at residues 433 to 453 is disordered; the sequence is GSGESLATGAEGRPSKPVTVA. Positions 475, 541, and 544 each coordinate [4Fe-4S] cluster.

Belongs to the aconitase/IPM isomerase family. In terms of assembly, monomer. [4Fe-4S] cluster serves as cofactor.

The catalysed reaction is citrate = D-threo-isocitrate. The enzyme catalyses (2S,3R)-3-hydroxybutane-1,2,3-tricarboxylate = 2-methyl-cis-aconitate + H2O. It functions in the pathway carbohydrate metabolism; tricarboxylic acid cycle; isocitrate from oxaloacetate: step 2/2. Its pathway is organic acid metabolism; propanoate degradation. Involved in the catabolism of short chain fatty acids (SCFA) via the tricarboxylic acid (TCA)(acetyl degradation route) and probably via the 2-methylcitrate cycle I (propionate degradation route). Catalyzes the reversible isomerization of citrate to isocitrate via cis-aconitate. Could catalyze the hydration of 2-methyl-cis-aconitate to yield (2R,3S)-2-methylisocitrate. The apo form of AcnA functions as a RNA-binding regulatory protein. The sequence is that of Aconitate hydratase A (acn) from Corynebacterium glutamicum (strain ATCC 13032 / DSM 20300 / JCM 1318 / BCRC 11384 / CCUG 27702 / LMG 3730 / NBRC 12168 / NCIMB 10025 / NRRL B-2784 / 534).